A 254-amino-acid chain; its full sequence is Phosphonates import ATP-binding protein PhnC (254 aa).

The region spanning 2–246 is the ABC transporter domain; that stretch reads IQLKNVSKIY…VFDDIYNGGN (245 aa). Residue 35–42 coordinates ATP; that stretch reads GLSGAGKS.

This sequence belongs to the ABC transporter superfamily. Phosphonates importer (TC 3.A.1.9.1) family. In terms of assembly, the complex is composed of two ATP-binding proteins (PhnC), two transmembrane proteins (PhnE) and a solute-binding protein (PhnD).

It localises to the cell membrane. It carries out the reaction phosphonate(out) + ATP + H2O = phosphonate(in) + ADP + phosphate + H(+). Part of the ABC transporter complex PhnCDE involved in phosphonates import. Responsible for energy coupling to the transport system. The polypeptide is Phosphonates import ATP-binding protein PhnC (Lactobacillus johnsonii (strain CNCM I-12250 / La1 / NCC 533)).